A 240-amino-acid polypeptide reads, in one-letter code: Ribonuclease HII (240 aa).

The RNase H type-2 domain occupies 31 to 222; sequence RLIAGVDEAG…VRRALGLETA (192 aa). A divalent metal cation-binding residues include D37, E38, and D130.

This sequence belongs to the RNase HII family. It depends on Mn(2+) as a cofactor. Mg(2+) serves as cofactor.

The protein resides in the cytoplasm. The enzyme catalyses Endonucleolytic cleavage to 5'-phosphomonoester.. Functionally, endonuclease that specifically degrades the RNA of RNA-DNA hybrids. The sequence is that of Ribonuclease HII from Xanthomonas campestris pv. campestris (strain B100).